The sequence spans 326 residues: Alkanal monooxygenase beta chain (326 aa).

Belongs to the bacterial luciferase oxidoreductase family. As to quaternary structure, heterodimer of an alpha and a beta chain.

The enzyme catalyses a long-chain fatty aldehyde + FMNH2 + O2 = a long-chain fatty acid + hnu + FMN + H2O + 2 H(+). Functionally, light-emitting reaction in luminous bacteria. The specific role of the beta subunit is unknown, but it is absolutely required for bioluminescence activity. This chain is Alkanal monooxygenase beta chain (luxB), found in Photobacterium leiognathi.